A 269-amino-acid polypeptide reads, in one-letter code: Serine/threonine-protein kinase ZRK7 (269 aa).

The Protein kinase domain maps to 80–269; sequence FDWSYAIGVD…KNRLMVTVIT (190 aa). Residues 86–94 and Lys106 contribute to the ATP site; that span reads IGVDRFVWY. Catalysis depends on Asp205, which acts as the Proton acceptor.

Belongs to the protein kinase superfamily. Ser/Thr protein kinase family. ZRK subfamily.

The enzyme catalyses L-seryl-[protein] + ATP = O-phospho-L-seryl-[protein] + ADP + H(+). It catalyses the reaction L-threonyl-[protein] + ATP = O-phospho-L-threonyl-[protein] + ADP + H(+). This is Serine/threonine-protein kinase ZRK7 from Arabidopsis thaliana (Mouse-ear cress).